Consider the following 976-residue polypeptide: LRR receptor-like serine/threonine-protein kinase ERECTA (976 aa).

Positions 1–24 (MALFRDIVLLGFLFCLSLVATVTS) are cleaved as a signal peptide. Residues 25-580 (EEGATLLEIK…RRTVRVSISR (556 aa)) lie on the Extracellular side of the membrane. N-linked (GlcNAc...) asparagine glycans are attached at residues asparagine 65 and asparagine 74. 20 LRR repeats span residues 69 to 92 (NVVA…GDLK), 93 to 115 (SLLS…IGDC), 117 to 140 (SLQN…SKLK), 141 to 163 (QLEQ…LSQI), 165 to 187 (NLKI…IYWN), 189 to 212 (VLQY…CQLT), 213 to 235 (GLWY…IGNC), 237 to 259 (AFQV…IGFL), 260 to 282 (QVAT…IGLM), 284 to 306 (ALAV…LGNL), 308 to 330 (FTEK…LGNM), 332 to 355 (KLHY…GKLT), 356 to 379 (DLFD…SSCT), 380 to 401 (NLNS…AFQK), 404 to 425 (SMTY…ELSR), 428 to 449 (NLDT…SLGD), 452 to 473 (HLLK…DFGN), 476 to 498 (SIME…LNQL), 500 to 522 (NIIL…ANCL), and 523 to 545 (SLTV…NNFS). N-linked (GlcNAc...) asparagine glycans are attached at residues asparagine 221 and asparagine 234. 2 N-linked (GlcNAc...) asparagine glycosylation sites follow: asparagine 305 and asparagine 329. A glycan (N-linked (GlcNAc...) asparagine) is linked at asparagine 409. Asparagine 457 carries N-linked (GlcNAc...) asparagine glycosylation. Residues asparagine 510, asparagine 528, and asparagine 543 are each glycosylated (N-linked (GlcNAc...) asparagine). The chain crosses the membrane as a helical span at residues 581-601 (AAILGIAIGGLVILLMVLIAA). The Cytoplasmic portion of the chain corresponds to 602–976 (CRPHNPPPFL…FGQVISQNSE (375 aa)). At threonine 645 the chain carries Phosphothreonine. The Protein kinase domain occupies 648-918 (LSEKYIIGHG…QVTRVLGSFM (271 aa)). ATP is bound by residues 654–662 (IGHGASSTV) and lysine 676. 2 positions are modified to phosphotyrosine: tyrosine 721 and tyrosine 760. Aspartate 773 serves as the catalytic Proton acceptor. The residue at position 815 (tyrosine 815) is a Phosphotyrosine. Phosphothreonine is present on threonine 823.

It belongs to the protein kinase superfamily. Ser/Thr protein kinase family. Homodimer and heterodimer with ERL1 and TMM. Interacts with EPF1, EPF2, EPFL4, EPFL5 and EPFL6. Interacts with SERK1, SERK2, SERK3/BAK1 and SERK4 in a EPF2-induced manner. Interacts with EPFL9/STOMAGEN. In terms of tissue distribution, mostly expressed in shoot apical meristems (SAM), organ primordia, flowers, siliques and young rosette leaves, and, to a lower extent, in stems and cauline leaves. Expressed in growing inflorescence stems and pedicels. Detected in epidermis, phloem and xylem.

The protein resides in the cell membrane. It carries out the reaction L-seryl-[protein] + ATP = O-phospho-L-seryl-[protein] + ADP + H(+). The catalysed reaction is L-threonyl-[protein] + ATP = O-phospho-L-threonyl-[protein] + ADP + H(+). Functionally, receptor kinase that, together with ERL1 and ERL2, regulates aerial architecture, including inflorescence (e.g. shoot apical meristem-originating organ shape, elongation of the internode and pedicels, and adaxial-abaxial polarity), and stomatal patterning (e.g. density and clustering), probably by tuning cell division and expansion. Redundantly involved with ERL1 in procambial development regulation. Forms a functional ligand-receptor pair with EPF2 (AC Q8LC53). Modulates plant transpiration efficiency by controlling stomatal density, leaf photosynthetic capacity, epidermal cell expansion, mesophyll cell proliferation and cell-cell contact. A phloem-specific expression of ER is sufficient for proper inflorescence architecture. Probable major trait regulating canalization (maintenance of phenotype despite varying environment) in many aspect of the plant physiology (e.g. plant morphology, light-dependent leaves number, branch number, flowering time, phytate and mineral concentrations) by transducing microenvironmental variation into phenotypic differentiation (ecological amplifier). May maintain development integrity in heat stress conditions. Regulates cell wall composition and structure. Confers resistance to the pathogenic bacteria Ralstonia solanacearum and to the necrotrophic fungi Plectosphaerella cucumerina and Pythium irregulare, and required for callose deposition upon infection. Resistance to P.cucumerina seems cell wall-mediated. Forms a constitutive complex with TMM involved in the recognition of the stomatal regulatory peptides EPF1, EPF2 and EPFL9/STOMAGEN. In Arabidopsis thaliana (Mouse-ear cress), this protein is LRR receptor-like serine/threonine-protein kinase ERECTA.